Reading from the N-terminus, the 875-residue chain is DNA topoisomerase 3-beta (875 aa).

The 151-residue stretch at S3–A153 folds into the Toprim domain. In terms of domain architecture, Topo IA-type catalytic spans N170–M589. Y332 (O-(5'-phospho-DNA)-tyrosine intermediate) is an active-site residue. The segment at Q371–G391 is disordered.

This sequence belongs to the type IA topoisomerase family.

It catalyses the reaction ATP-independent breakage of single-stranded DNA, followed by passage and rejoining.. In terms of biological role, releases the supercoiling and torsional tension of DNA introduced during the DNA replication and transcription by transiently cleaving and rejoining one strand of the DNA duplex. Introduces a single-strand break via transesterification at a target site in duplex DNA. The scissile phosphodiester is attacked by the catalytic tyrosine of the enzyme, resulting in the formation of a DNA-(5'-phosphotyrosyl)-enzyme intermediate and the expulsion of a 3'-OH DNA strand. The free DNA strand than undergoes passage around the unbroken strand thus removing DNA supercoils. Finally, in the religation step, the DNA 3'-OH attacks the covalent intermediate to expel the active-site tyrosine and restore the DNA phosphodiester backbone. Weakly relaxes negative supercoils and displays a distinct preference for binding single-stranded DNA. The chain is DNA topoisomerase 3-beta (Top3beta) from Drosophila melanogaster (Fruit fly).